The chain runs to 441 residues: Plasmepsin VI (441 aa).

The Cytoplasmic portion of the chain corresponds to 1-7; it reads MTNFCIK. The helical; Signal-anchor for type II membrane protein transmembrane segment at 8–28 threads the bilayer; it reads SYLFLYLSFLLFFDIITIFHV. Residues 29-441 lie on the Extracellular side of the membrane; that stretch reads SSIRISTVLK…VGVVKSNHNF (413 aa). The Peptidase A1 domain maps to 109-435; that stretch reads FIGDIEIGNP…DNDHKLVGVV (327 aa). Residues Asp127 and Asp324 contribute to the active site.

The protein belongs to the peptidase A1 family.

It localises to the membrane. In terms of biological role, during the development in the mosquito midgut, plays a role in sporozoite egress from oocysts. This Plasmodium berghei (strain Anka) protein is Plasmepsin VI.